A 225-amino-acid chain; its full sequence is tRNA 2'-phosphotransferase 1 (225 aa).

A disordered region spans residues 1–21 (MDCETRGRGRRGRGNRNEESR).

It belongs to the KptA/TPT1 family.

It catalyses the reaction 2'-phospho-[ligated tRNA] + NAD(+) = mature tRNA + ADP-alpha-D-ribose 1'',2''-cyclic phosphate + nicotinamide. Functionally, catalyzes the last step of tRNA splicing, the transfer of the splice junction 2'-phosphate from ligated tRNA to NAD to produce ADP-ribose 1''-2'' cyclic phosphate. The sequence is that of tRNA 2'-phosphotransferase 1 (trpt1) from Danio rerio (Zebrafish).